A 1198-amino-acid chain; its full sequence is DNA polymerase (1198 aa).

Disordered stretches follow at residues 1–90, 179–198, and 906–931; these read MALV…TVVA, LEQPDGQGQAAEVEDHQPNP, and ALADSDAEESEDERAPTPFYSPPSGT. A compositionally biased stretch (low complexity) spans 30–40; sequence QQPPRAAPAPA.

Belongs to the DNA polymerase type-B family. In terms of assembly, heterodimer with the terminal protein; this heterodimer binds to bp 9 to 18 of the genome. Forms a complex with viral pTP, DBP and hosts NFIA and POU2F1/OCT1 for initiation of replication.

Its subcellular location is the host nucleus. It carries out the reaction DNA(n) + a 2'-deoxyribonucleoside 5'-triphosphate = DNA(n+1) + diphosphate. Eukaryotic-type DNA polymerase involved in viral genomic replication. DNA synthesis is protein primed, and acts in a strand displacement replication. Assembles in complex with viral pTP, DBP, host NFIA and host POU2F1/OCT1 on viral origin of replication. The polymerase covalently transfers dCMP onto pTP, thereby initiating complementary strand synthesis. The polypeptide is DNA polymerase (Homo sapiens (Human)).